Here is a 123-residue protein sequence, read N- to C-terminus: uncharacterized protein (123 aa).

This is an uncharacterized protein from Aquifex aeolicus (strain VF5).